A 363-amino-acid polypeptide reads, in one-letter code: MLEAVTNPKSSLATFSKQLNGLLQAKVVVCKSVNPYFNLALENYLYENSTAKHCLLLYTNSPSVIIGRNQNPWVEANVKLCRDNFVNIIRRKSGGGTVFHDFGNLNYSVLMNREEFSHTENASIMIQALRNLGVHARLNQRHDIVLAQSQRKISGSAYKISRNRCYHHGTMLLNSDLEGVREYLRSPSTGILSKGVSSTRSPVSNTKLLKAEFIKQVISCFLLHKSHSTTTKPLSKPRASSKRLYDIEPKSVITLEQNDLLGVPSILKAVNELQSWEWTFGQTPSFKQHLESTELSVSMDISVVHGRLEKVIFSTPNATLEHELSSIPWTGLCYESGFANTFLISGIHSKEAISILKWISDSI.

Residues Ser-49–Thr-229 form the BPL/LPL catalytic domain. ATP contacts are provided by residues Arg-91, Gly-96–Phe-99, and Lys-152. Lys-152 contacts (R)-lipoate.

It belongs to the LplA family. Monomer.

The protein resides in the cytoplasm. It carries out the reaction L-lysyl-[lipoyl-carrier protein] + (R)-lipoate + ATP = N(6)-[(R)-lipoyl]-L-lysyl-[lipoyl-carrier protein] + AMP + diphosphate + H(+). It functions in the pathway protein modification; protein lipoylation via exogenous pathway; protein N(6)-(lipoyl)lysine from lipoate: step 1/2. Its pathway is protein modification; protein lipoylation via exogenous pathway; protein N(6)-(lipoyl)lysine from lipoate: step 2/2. In terms of biological role, catalyzes both the ATP-dependent activation of exogenously supplied lipoate to lipoyl-AMP and the transfer of the activated lipoyl onto the lipoyl domains of lipoate-dependent enzymes. The protein is Putative lipoate-protein ligase A (aim22) of Schizosaccharomyces pombe (strain 972 / ATCC 24843) (Fission yeast).